Here is a 393-residue protein sequence, read N- to C-terminus: Methylthioribose kinase (393 aa).

Residues asparagine 38, lysine 53, and 107-109 (EDL) each bind ATP. Residue aspartate 225 participates in substrate binding. 242–244 (DPE) serves as a coordination point for ATP. Residue arginine 332 participates in substrate binding.

Belongs to the methylthioribose kinase family. As to quaternary structure, homodimer.

It carries out the reaction 5-(methylsulfanyl)-D-ribose + ATP = 5-(methylsulfanyl)-alpha-D-ribose 1-phosphate + ADP + H(+). It functions in the pathway amino-acid biosynthesis; L-methionine biosynthesis via salvage pathway; S-methyl-5-thio-alpha-D-ribose 1-phosphate from S-methyl-5'-thioadenosine (hydrolase route): step 2/2. Catalyzes the phosphorylation of methylthioribose into methylthioribose-1-phosphate. In Bacillus cereus (strain AH820), this protein is Methylthioribose kinase.